Reading from the N-terminus, the 87-residue chain is Selenoprotein W (87 aa).

The segment at residues 10-13 (CGAU) is a cross-link (cysteinyl-selenocysteine (Cys-Sec); redox-active). A non-standard amino acid (selenocysteine) is located at residue U13. C37 bears the S-glutathionyl cysteine mark.

It belongs to the SelWTH family. Selenoprotein W subfamily. As to quaternary structure, interacts with DPYSL2, PRDX1, YWHAB, YWHAG, HSP70 and HSP90. In terms of tissue distribution, highest levels detected in skeletal muscle, tongue, heart and brain. Expressed at significantly higher levels in female skeletal muscle than in male and at slightly higher levels in female cardiac muscle than in male (at protein level). Also detected at low levels in liver.

It localises to the cytoplasm. In terms of biological role, plays a role as a glutathione (GSH)-dependent antioxidant. May be involved in a redox-related process. May play a role in the myopathies of selenium deficiency. This Macaca mulatta (Rhesus macaque) protein is Selenoprotein W.